Here is a 200-residue protein sequence, read N- to C-terminus: MYEYIKGTLTHIDGSYVVIESFGIGYAIMLSERFLVDLRAFMHQEVLIYVHSVIRETEHVLYGFSSRAERECFRLLISFSGIGPKTGLSILNMFPLQELCSIARLENVKAIASVPGIGKKTAEKLMVDLKQKLPTLMPLYLEEPVVPSSTANSSFKEGIGALMNLGFSRLAADRMMTEAVKELSEEASVAELLPIALRKS.

The tract at residues 1-65 is domain I; that stretch reads MYEYIKGTLT…ETEHVLYGFS (65 aa). Residues 66–144 are domain II; it reads SRAERECFRL…TLMPLYLEEP (79 aa). Residues 145-149 form a flexible linker region; the sequence is VVPSS. The tract at residues 150 to 200 is domain III; that stretch reads TANSSFKEGIGALMNLGFSRLAADRMMTEAVKELSEEASVAELLPIALRKS.

It belongs to the RuvA family. As to quaternary structure, homotetramer. Forms an RuvA(8)-RuvB(12)-Holliday junction (HJ) complex. HJ DNA is sandwiched between 2 RuvA tetramers; dsDNA enters through RuvA and exits via RuvB. An RuvB hexamer assembles on each DNA strand where it exits the tetramer. Each RuvB hexamer is contacted by two RuvA subunits (via domain III) on 2 adjacent RuvB subunits; this complex drives branch migration. In the full resolvosome a probable DNA-RuvA(4)-RuvB(12)-RuvC(2) complex forms which resolves the HJ.

Its subcellular location is the cytoplasm. Its function is as follows. The RuvA-RuvB-RuvC complex processes Holliday junction (HJ) DNA during genetic recombination and DNA repair, while the RuvA-RuvB complex plays an important role in the rescue of blocked DNA replication forks via replication fork reversal (RFR). RuvA specifically binds to HJ cruciform DNA, conferring on it an open structure. The RuvB hexamer acts as an ATP-dependent pump, pulling dsDNA into and through the RuvAB complex. HJ branch migration allows RuvC to scan DNA until it finds its consensus sequence, where it cleaves and resolves the cruciform DNA. The polypeptide is Holliday junction branch migration complex subunit RuvA (Chlamydia trachomatis serovar L2 (strain ATCC VR-902B / DSM 19102 / 434/Bu)).